The following is a 213-amino-acid chain: NADH-quinone oxidoreductase subunit B (213 aa).

Residues C38, C39, C104, and C133 each coordinate [4Fe-4S] cluster. The segment at 172–213 (IMPENTNRFPGQLEKPKTSTLTLEAPDADDAEEASTPEPVAA) is disordered. Residues 197–206 (PDADDAEEAS) show a composition bias toward acidic residues.

The protein belongs to the complex I 20 kDa subunit family. NDH-1 is composed of 14 different subunits. Subunits NuoB, C, D, E, F, and G constitute the peripheral sector of the complex. Requires [4Fe-4S] cluster as cofactor.

Its subcellular location is the cell inner membrane. The enzyme catalyses a quinone + NADH + 5 H(+)(in) = a quinol + NAD(+) + 4 H(+)(out). Functionally, NDH-1 shuttles electrons from NADH, via FMN and iron-sulfur (Fe-S) centers, to quinones in the respiratory chain. The immediate electron acceptor for the enzyme in this species is believed to be a menaquinone. Couples the redox reaction to proton translocation (for every two electrons transferred, four hydrogen ions are translocated across the cytoplasmic membrane), and thus conserves the redox energy in a proton gradient. This is NADH-quinone oxidoreductase subunit B (nuoB) from Salinibacter ruber (strain DSM 13855 / M31).